A 711-amino-acid polypeptide reads, in one-letter code: T-box transcription factor TBX2 (711 aa).

Positions Leu109–Asp287 form a DNA-binding region, T-box. The interval Pro313–Pro449 is disordered. Pro residues predominate over residues Asp326–Ala340. Phosphoserine occurs at positions 336, 342, and 360. 3 stretches are compositionally biased toward basic and acidic residues: residues Glu363–Ser372, Thr390–Thr409, and Ser421–Glu444. Residues Gly518–Ala602 form a repression domain 1 (RD1) region. Phosphoserine is present on residues Ser623, Ser652, Ser656, and Ser675. Residues Thr640–Leu687 form a disordered region.

Binds DNA as a monomer. Interacts with CHD4, HDAC1 and HDAC2, perhaps as components of a NuRD-like complex. Interacts with CBX3, HMGB2 and PBX1. Interacts with PML. In terms of processing, phosphorylated. May be phosphorylated by p38 MAPK in response to UV irradiation stress. As to expression, in adults, highest levels in lung. Also found in heart, kidney, and ovary.

Its subcellular location is the nucleus. Its function is as follows. Transcription factor which acts as a transcriptional repressor. May also function as a transcriptional activator. Binds to the palindromic T site 5'-TTCACACCTAGGTGTGAA-3' DNA sequence, or a half-site, which are present in the regulatory region of several genes. Required for cardiac atrioventricular canal formation. May cooperate with NKX2.5 to negatively modulate expression of NPPA/ANF in the atrioventricular canal. May play a role as a positive regulator of TGFB2 expression, perhaps acting in concert with GATA4 in the developing outflow tract myocardium. Plays a role in limb pattern formation. Acts as a transcriptional repressor of ADAM10 gene expression, perhaps in concert with histone deacetylase HDAC1 as cofactor. Involved in branching morphogenesis in both developing lungs and adult mammary glands, via negative modulation of target genes; acting redundantly with TBX3. Required, together with TBX3, to maintain cell proliferation in the embryonic lung mesenchyme; perhaps acting downstream of SHH, BMP and TGFbeta signaling. Involved in modulating early inner ear development, acting independently of, and also redundantly with TBX3, in different subregions of the developing ear. Acts as a negative regulator of PML function in cellular senescence. Acts as a negative regulator of expression of CDKN1A/p21, IL33 and CCN4; repression of CDKN1A is enhanced in response to UV-induced stress, perhaps as a result of phosphorylation by p38 MAPK. Negatively modulates expression of CDKN2A/p19ARF and CDH1/E-cadherin. Plays a role in induction of the epithelial-mesenchymal transition (EMT). Plays a role in melanocyte proliferation, perhaps via regulation of cyclin CCND1. Involved in melanogenesis, acting via negative modulation of expression of DHICA oxidase/TYRP1 and P protein/OCA2. Involved in regulating retinal pigment epithelium (RPE) cell proliferation, perhaps via negatively modulating transcription of the transcription factor CEBPD. The chain is T-box transcription factor TBX2 (Tbx2) from Mus musculus (Mouse).